We begin with the raw amino-acid sequence, 96 residues long: Small ribosomal subunit protein bS6 (96 aa).

This sequence belongs to the bacterial ribosomal protein bS6 family.

Its function is as follows. Binds together with bS18 to 16S ribosomal RNA. The protein is Small ribosomal subunit protein bS6 of Bacillus mycoides (strain KBAB4) (Bacillus weihenstephanensis).